The primary structure comprises 127 residues: Major sperm protein 19/31/40/45/50/51/53/59/61/65/81/113/142 (127 aa).

At alanine 2 the chain carries N-acetylalanine. Residues 9 to 126 enclose the MSP domain; sequence DIQTQPGTKI…RRKNLPIEYN (118 aa).

In terms of assembly, helical subfilaments are built from MSP dimers; filaments are formed from two subfilaments coiling round one another; and filaments themselves supercoil to produce bundles. Sperm.

It localises to the cell projection. It is found in the pseudopodium. The protein localises to the cytoplasm. Its subcellular location is the cytoskeleton. Its function is as follows. Central component in molecular interactions underlying sperm crawling. Forms an extensive filament system that extends from sperm villipoda, along the leading edge of the pseudopod. In Caenorhabditis elegans, this protein is Major sperm protein 19/31/40/45/50/51/53/59/61/65/81/113/142 (msp-19).